The following is a 233-amino-acid chain: Leucyl/phenylalanyl-tRNA--protein transferase (233 aa).

Belongs to the L/F-transferase family.

Its subcellular location is the cytoplasm. It catalyses the reaction N-terminal L-lysyl-[protein] + L-leucyl-tRNA(Leu) = N-terminal L-leucyl-L-lysyl-[protein] + tRNA(Leu) + H(+). The enzyme catalyses N-terminal L-arginyl-[protein] + L-leucyl-tRNA(Leu) = N-terminal L-leucyl-L-arginyl-[protein] + tRNA(Leu) + H(+). It carries out the reaction L-phenylalanyl-tRNA(Phe) + an N-terminal L-alpha-aminoacyl-[protein] = an N-terminal L-phenylalanyl-L-alpha-aminoacyl-[protein] + tRNA(Phe). Functions in the N-end rule pathway of protein degradation where it conjugates Leu, Phe and, less efficiently, Met from aminoacyl-tRNAs to the N-termini of proteins containing an N-terminal arginine or lysine. The protein is Leucyl/phenylalanyl-tRNA--protein transferase of Desulfatibacillum aliphaticivorans.